Consider the following 126-residue polypeptide: MAFKVVISDKEKSVQMEVDPSESRGLIGLTIGDEFDGSIIGLSGYKLKITGGSDKNGFPMKKTVPGARRIRSLVSGGVGYKPRRDGERRRKTFRGNTISDDIVQINTVVIEKGEKPLEELLGADEE.

The protein belongs to the eukaryotic ribosomal protein eS6 family.

This is Small ribosomal subunit protein eS6 from Methanothermobacter thermautotrophicus (strain ATCC 29096 / DSM 1053 / JCM 10044 / NBRC 100330 / Delta H) (Methanobacterium thermoautotrophicum).